The primary structure comprises 73 residues: Long neurotoxin 3 (73 aa).

Cystine bridges form between Cys3–Cys21, Cys14–Cys42, Cys27–Cys31, Cys46–Cys57, and Cys58–Cys63.

The protein belongs to the three-finger toxin family. Long-chain subfamily. Type II alpha-neurotoxin sub-subfamily. In terms of tissue distribution, expressed by the venom gland.

It localises to the secreted. Its function is as follows. Binds with high affinity to muscular (alpha-1/CHRNA1) and neuronal (alpha-7/CHRNA7) nicotinic acetylcholine receptor (nAChR) and inhibits acetylcholine from binding to the receptor, thereby impairing neuromuscular and neuronal transmission. The sequence is that of Long neurotoxin 3 from Ophiophagus hannah (King cobra).